We begin with the raw amino-acid sequence, 1137 residues long: Bone sialoprotein-binding protein (1137 aa).

Positions 1–52 (MINRDNKKAITKKGMISNRLNKFSIRKYTVGTASILVGTTLIFGLGNQEAKA) are cleaved as a signal peptide. Positions 53–601 (AENTSTENAK…GDGTVKPEEK (549 aa)) are ligand binding A region. Disordered stretches follow at residues 54-249 (ENTS…TAPT) and 675-697 (LPTK…VTVK). Positions 61 to 75 (AKQDEASASDNKEVV) are enriched in basic and acidic residues. Residues 77–89 (ETENNSTQKNDLT) are compositionally biased toward polar residues. The span at 92–106 (IKKETNTDSHQEAKE) shows a compositional bias: basic and acidic residues. Over residues 109-126 (TTSSTQQQQNNATTSTET) the composition is skewed to low complexity. A compositionally biased stretch (basic and acidic residues) spans 130-145 (NIEKENVKPSTDKTAT). The span at 158 to 207 (PNNTNNDVTTKPSTSEIQTTPTTPQESTNIENSQPQPTPSKVDNQVTDAT) shows a compositional bias: polar residues. A compositionally biased stretch (basic and acidic residues) spans 216-241 (SKEELKNNPEKLKELVRNDSNTDRST). 3 consecutive CNA-B domains span residues 602–714 (LYKI…YKEP), 715–824 (KYNL…YKTP), and 825–935 (KYSL…EEDT). Residues 896–1112 (TQTGTNTTED…TGSENNGSNN (217 aa)) are disordered. 2 stretches are compositionally biased toward acidic residues: residues 903–913 (TEDDKDADGGE) and 930–1076 (YFEE…DSDS). An LPXTG sorting signal motif is present at residues 1100–1104 (LPETG). Thr1103 is subject to Pentaglycyl murein peptidoglycan amidated threonine. A propeptide spans 1104–1137 (GSENNGSNNATLFGGLFAALGSLLLFGRRKKQNK) (removed by sortase).

This sequence belongs to the serine-aspartate repeat-containing protein (SDr) family.

The protein resides in the secreted. It localises to the cell wall. Specifically interacts with bone sialoprotein (BSP), a glycoprotein of bone and dentin extracellular matrix. Could contribute to staphylococcal osteomyelitis and arthritis. The protein is Bone sialoprotein-binding protein (bbp) of Staphylococcus aureus (strain MRSA252).